The chain runs to 420 residues: MDVDNGEGQVQVHLKTKQEQYAVPDVPYAIDGTVTTVELNTFVNALLRQKDGSSDTDFDFLVFDEYLRGRLCDHLREKAISFEDAIEIEYVERFPAPEPQDCLLHDDWVSAVKARGKWILSGCYDNSLNLWTNKGKHILTISGHTAPIKAVDWISLDEETGRFVSTSQDQTAMLWKWNVGSNAVDCVSVCKGHERGVDSVSVSPDGLRFATGSWDTMLKVWSAELDDGVEGSSKRMKESGVRTPKITLQGHRESVSAVQWMDATTLLTGSWDYTLKVWDLSLEGIKTEISTNKSIFDASYSKLNRLILTASADKNLRLYDPRTNQGSVVRNTYLGHNAWVQTVMWSTTEEFLFVSGAYDNQNKLWDCRSPKAPLYDLLGHGDKVLDIDWSNPKYIVSGGVDNTVRVFKSRKALAEDTETK.

The tract at residues 10–92 is ubiquitin-like (UBL) domain; the sequence is VQVHLKTKQE…EDAIEIEYVE (83 aa). WD repeat units lie at residues 104–142, 143–185, 192–231, 250–288, 290–329, 335–375, and 379–417; these read LHDD…LTIS, GHTA…NAVD, GHER…GVEG, GHRE…IKTE, STNK…GSVV, GHNA…APLY, and GHGD…AEDT.

This sequence belongs to the WD repeat WDR12/YTM1 family.

The protein localises to the nucleus. Its subcellular location is the nucleolus. The protein resides in the nucleoplasm. In terms of biological role, required for maturation of ribosomal RNAs and formation of the large ribosomal subunit. The protein is Ribosome biogenesis protein WDR12 homolog of Drosophila sechellia (Fruit fly).